The chain runs to 312 residues: Homoserine O-succinyltransferase (312 aa).

Residue C142 is the Acyl-thioester intermediate of the active site. K163 and S192 together coordinate substrate. The active-site Proton acceptor is the H235. E237 is an active-site residue. R249 lines the substrate pocket.

It belongs to the MetA family.

It localises to the cytoplasm. The enzyme catalyses L-homoserine + succinyl-CoA = O-succinyl-L-homoserine + CoA. The protein operates within amino-acid biosynthesis; L-methionine biosynthesis via de novo pathway; O-succinyl-L-homoserine from L-homoserine: step 1/1. Transfers a succinyl group from succinyl-CoA to L-homoserine, forming succinyl-L-homoserine. The sequence is that of Homoserine O-succinyltransferase from Shewanella halifaxensis (strain HAW-EB4).